Here is a 350-residue protein sequence, read N- to C-terminus: Trans-enoyl reductase iliB (350 aa).

50–53 lines the NADP(+) pocket; the sequence is VDGK. 145–152 serves as a coordination point for substrate; the sequence is AAIATVGL. Residues 177–180, Y195, and 242–243 contribute to the NADP(+) site; these read SAAS and LD. Substrate is bound at residue 262 to 266; that stretch reads TPTQF. An NADP(+)-binding site is contributed by 331–332; the sequence is IK.

Belongs to the zinc-containing alcohol dehydrogenase family. As to quaternary structure, monomer.

It carries out the reaction N-[(4E,6E,10S,12Z,14E)-6,10-dimethyl-3-oxohexadeca-4,6,12,14-tetraenoyl]-L-tyrosyl-[ACP] = (3E,5S)-3-[(2E,4E,8S,10E,12Z)-1-hydroxy-4,8-dimethyltetradeca-2,4,10,12-tetraen-1-ylidene]-5-[(4-hydroxyphenyl)methyl]pyrrolidine-2,4-dione + holo-[ACP] + H(+). It functions in the pathway mycotoxin biosynthesis. Its function is as follows. Trans-enoyl reductase; part of the gene cluster that mediates the biosynthesis of ilicicolin H, a 4-hydroxy-2-pyridonealkaloid that has potent and broad antifungal activities by inhibiting the mitochondrial respiration chain. IliB collaborates with the hybrid PKS-NRPS synthetase iliA to assemble the backbone of ilicicolin H. The PKS portion of iliA and trans-acting enoyl reductase iliB work together to construct an octaketide, and two methyl groups are introduced by the MT domain of iliA during the chain assembly. The nascent chain is then condensed with tyrosine, catalyzed by the iliA C domain, and the resulting PKS-NRPS hybrid is offloaded by the iliA RED domain to form an advanced tetramic acid intermediate. The biosynthesis of ilicicolin H starts with formation of the tetramic acid by the hybrid PKS-NRPS synthetase iliA with the partnering trans-enoyl reductase iliB since iliA lacks a designated enoylreductase (ER) domain. The cytochrome P450 monooxygenase iliC then catalyzes the ring expansion of the tetramate to the acyclic 2-pyridone. The pericyclase iliD further converts the acyclic 2-pyridone into 8-epi-ilicicolin H. 8-epi-ilicicolin H might then spontaneously convert to ilicicolin H since ilicicolin H is produced in the absence of the epimerase iliE, in contrast to what was observed for the Talaromyces variabilis ilicolin H biosynthetic pathway. This is Trans-enoyl reductase iliB from Hypocrea jecorina (strain QM6a) (Trichoderma reesei).